Here is a 455-residue protein sequence, read N- to C-terminus: Probable glycine dehydrogenase (decarboxylating) subunit 1 (455 aa).

Belongs to the GcvP family. N-terminal subunit subfamily. As to quaternary structure, the glycine cleavage system is composed of four proteins: P, T, L and H. In this organism, the P 'protein' is a heterodimer of two subunits.

It catalyses the reaction N(6)-[(R)-lipoyl]-L-lysyl-[glycine-cleavage complex H protein] + glycine + H(+) = N(6)-[(R)-S(8)-aminomethyldihydrolipoyl]-L-lysyl-[glycine-cleavage complex H protein] + CO2. Functionally, the glycine cleavage system catalyzes the degradation of glycine. The P protein binds the alpha-amino group of glycine through its pyridoxal phosphate cofactor; CO(2) is released and the remaining methylamine moiety is then transferred to the lipoamide cofactor of the H protein. This chain is Probable glycine dehydrogenase (decarboxylating) subunit 1, found in Saccharolobus solfataricus (strain ATCC 35092 / DSM 1617 / JCM 11322 / P2) (Sulfolobus solfataricus).